The chain runs to 907 residues: Coatomer subunit beta'-1 (907 aa).

9 WD repeats span residues 13–52, 55–94, 97–136, 140–180, 183–224, 227–266, 269–309, 351–389, and 461–501; these read QRSERVKSVDLHPTEPWILSSLYSGSVCIWDYQSQTMVKS, VSELPVRSAKFISRKQWVVAGADDMFIRVYNYNTMDKVKV, AHTDYIRCVAVHPTLPYVLSSSDDMLIKLWDWDKGWMCTQ, GHSH…PNFT, GHQK…CVQT, GHTHNISAVCFHPELPIIITGSEDGTVRIWHSTTYRLENT, YGLE…ASMD, SCDLYPQSLKHNPNGRFVVVCGDGEFIIYTALAWRNRSF, and RIDV…SYLE. Acidic residues-rich tracts occupy residues 850-866 and 874-887; these read ETEDALDENGEPDEEVL and STDEAVEVDADEPE. The interval 850–887 is disordered; the sequence is ETEDALDENGEPDEEVLEENKVEESTDEAVEVDADEPE.

It belongs to the WD repeat COPB2 family. Oligomeric complex that consists of at least the alpha, beta, beta', gamma, delta, epsilon and zeta subunits.

It localises to the cytoplasm. Its subcellular location is the golgi apparatus membrane. It is found in the cytoplasmic vesicle. The protein resides in the COPI-coated vesicle membrane. Its function is as follows. The coatomer is a cytosolic protein complex that binds to dilysine motifs and reversibly associates with Golgi non-clathrin-coated vesicles, which further mediate biosynthetic protein transport from the ER, via the Golgi up to the trans Golgi network. Coatomer complex is required for budding from Golgi membranes, and is essential for the retrograde Golgi-to-ER transport of dilysine-tagged proteins. In Oryza sativa subsp. japonica (Rice), this protein is Coatomer subunit beta'-1.